We begin with the raw amino-acid sequence, 389 residues long: MFDIKSIIRPNILTLEPYRCARDDFKTGILLDANENTHGPAIPTPDETELALELNRYPDPHQLELKQQVIDFREKHPNKYTKEKLSVENLCLGVGSDESIDMLLRCVCVPGKDKMLICPPTYGMYSICATVNDVVIEKVPLTVPDFQIDIPAILSKVKSDPNIKLLYLTSPGNPTGKLINVDSIITLLEELLNCWQGLIVVDEAYIDFTEPGSSMSTLVNQYPNLVVLQTLSKSFGLAGIRLGITFCSKELSWYLNAMKYPYNISSLTSNVALKATKQGLEIMENYVSKITEQRDIVLQKLLSLKYVGRNIGGLDSNFVLVEVLDKQGNPSNEVAKQLYNTLATGKSIVVRFRGSELNCVGGLRISIGTEEENKQLLEQFEAVLNDINQ.

Position 233 is an N6-(pyridoxal phosphate)lysine (Lys-233).

Belongs to the class-II pyridoxal-phosphate-dependent aminotransferase family. Pyridoxal 5'-phosphate is required as a cofactor.

The enzyme catalyses L-histidinol phosphate + 2-oxoglutarate = 3-(imidazol-4-yl)-2-oxopropyl phosphate + L-glutamate. Its pathway is amino-acid biosynthesis; L-histidine biosynthesis; L-histidine from 5-phospho-alpha-D-ribose 1-diphosphate: step 7/9. The polypeptide is Histidinol-phosphate aminotransferase (HIS5) (Candida maltosa (Yeast)).